Here is a 626-residue protein sequence, read N- to C-terminus: DNA-directed RNA polymerase subunit gamma (626 aa).

Zn(2+) contacts are provided by cysteine 71, cysteine 73, cysteine 86, and cysteine 89. Residues aspartate 467, aspartate 469, and aspartate 471 each coordinate Mg(2+).

Belongs to the RNA polymerase beta' chain family. RpoC1 subfamily. As to quaternary structure, in cyanobacteria the RNAP catalytic core is composed of 2 alpha, 1 beta, 1 beta', 1 gamma and 1 omega subunit. When a sigma factor is associated with the core the holoenzyme is formed, which can initiate transcription. It depends on Mg(2+) as a cofactor. Zn(2+) is required as a cofactor.

The enzyme catalyses RNA(n) + a ribonucleoside 5'-triphosphate = RNA(n+1) + diphosphate. DNA-dependent RNA polymerase catalyzes the transcription of DNA into RNA using the four ribonucleoside triphosphates as substrates. The protein is DNA-directed RNA polymerase subunit gamma of Synechocystis sp. (strain ATCC 27184 / PCC 6803 / Kazusa).